A 373-amino-acid polypeptide reads, in one-letter code: Meiosis-specific kinetochore protein (373 aa).

Disordered regions lie at residues 1-91 (MWPL…QDEK) and 250-276 (STPE…LTST). Residues 77–91 (SLQENRSSEDTQDEK) show a composition bias toward basic and acidic residues. Positions 275 to 277 (STP) match the POLO box domain (PBD)-binding motif. The segment at 332–335 (EICC) is required for localization to kinetochores.

As to quaternary structure, interacts with CENPC. Interacts with PLK1; required for recruitment of PLK1 at kinetochores.

Its subcellular location is the chromosome. The protein localises to the centromere. The protein resides in the kinetochore. Key regulator of kinetochore function during meiosis I: required both for mono-orientation of kinetochores on sister chromosomes and protection of centromeric cohesin from separase-mediated cleavage. Acts by facilitating kinetochore mono-orientation during meiosis I, when kinetochores on sister chromosomes face the same direction and are thus captured and pulled by spindle fibers from the same pole. Also required to prevent cleavage of cohesin at centromeres during meiosis I, possibly by acting as a regulator of the shugoshin-dependent protection pathway. Acts in collaboration with PLK1: required for PLK1 enrichment to kinetochores. Not required during meiosis II or mitosis. In Homo sapiens (Human), this protein is Meiosis-specific kinetochore protein.